A 317-amino-acid polypeptide reads, in one-letter code: Adenine deaminase (317 aa).

The Zn(2+) site is built by His-14, His-16, and His-194. The Proton donor role is filled by Glu-197. Zn(2+) is bound at residue Asp-275. Asp-276 is a substrate binding site.

Belongs to the metallo-dependent hydrolases superfamily. Adenosine and AMP deaminases family. Adenine deaminase type 2 subfamily. The cofactor is Zn(2+).

The enzyme catalyses adenine + H2O + H(+) = hypoxanthine + NH4(+). Its function is as follows. Catalyzes the hydrolytic deamination of adenine to hypoxanthine. Plays an important role in the purine salvage pathway and in nitrogen catabolism. In Pseudomonas fluorescens (strain Pf0-1), this protein is Adenine deaminase.